The sequence spans 764 residues: 5-methyltetrahydropteroyltriglutamate--homocysteine methyltransferase (764 aa).

Residues 16–19 and Lys-121 contribute to the 5-methyltetrahydropteroyltri-L-glutamate site; that span reads RELK. Residues 440-442 and Glu-493 each bind L-homocysteine; that span reads IGS. L-methionine contacts are provided by residues 440–442 and Glu-493; that span reads IGS. 5-methyltetrahydropteroyltri-L-glutamate-binding positions include 524 to 525 and Trp-570; that span reads RC. Asp-608 contacts L-homocysteine. Residue Asp-608 participates in L-methionine binding. Residue Glu-614 coordinates 5-methyltetrahydropteroyltri-L-glutamate. Residues His-650, Cys-652, and Glu-674 each coordinate Zn(2+). The Proton donor role is filled by His-703. Cys-735 is a binding site for Zn(2+).

It belongs to the vitamin-B12 independent methionine synthase family. Zn(2+) serves as cofactor.

It catalyses the reaction 5-methyltetrahydropteroyltri-L-glutamate + L-homocysteine = tetrahydropteroyltri-L-glutamate + L-methionine. It functions in the pathway amino-acid biosynthesis; L-methionine biosynthesis via de novo pathway; L-methionine from L-homocysteine (MetE route): step 1/1. In terms of biological role, catalyzes the transfer of a methyl group from 5-methyltetrahydrofolate to homocysteine resulting in methionine formation. This chain is 5-methyltetrahydropteroyltriglutamate--homocysteine methyltransferase, found in Burkholderia orbicola (strain MC0-3).